The sequence spans 555 residues: Glucose-6-phosphate isomerase (555 aa).

Residue Glu360 is the Proton donor of the active site. Catalysis depends on residues His391 and Lys519.

It belongs to the GPI family.

The protein localises to the cytoplasm. It carries out the reaction alpha-D-glucose 6-phosphate = beta-D-fructose 6-phosphate. Its pathway is carbohydrate biosynthesis; gluconeogenesis. It functions in the pathway carbohydrate degradation; glycolysis; D-glyceraldehyde 3-phosphate and glycerone phosphate from D-glucose: step 2/4. Functionally, catalyzes the reversible isomerization of glucose-6-phosphate to fructose-6-phosphate. This chain is Glucose-6-phosphate isomerase, found in Acinetobacter baumannii (strain AB307-0294).